Consider the following 311-residue polypeptide: Taste receptor type 2 member 40 (311 aa).

Residues 1–9 (MSSLFSSFC) lie on the Extracellular side of the membrane. A helical transmembrane segment spans residues 10-30 (LVIAIFESVVGLLGNGTIVAV). Topologically, residues 31–55 (SSTSCIRSKILSSYDVIVIFLSLSR) are cytoplasmic. A helical membrane pass occupies residues 56 to 76 (FFLQLWMILDFLLIFFCQPSY). The Extracellular portion of the chain corresponds to 77 to 87 (YEENLFVTFKT). Residues 88-108 (VFIFLNSYSFWFAAWLSVFYC) form a helical membrane-spanning segment. The Cytoplasmic segment spans residues 109 to 128 (VKVASFTQSFLSWLKQRIAS). Residues 129-149 (LIPWMLITSSLFSFATSLPFF) traverse the membrane as a helical segment. Residues 150-178 (WDSYNAHSNFTTPLTMTNSSKRITTRKTN) are Extracellular-facing. The helical transmembrane segment at 179–199 (LIFLILLCNVGIALPSIMLVF) threads the bilayer. The Cytoplasmic portion of the chain corresponds to 200-235 (SSILLIRSLWRHTRQMQNNATGFRDPSLEALIGAIK). A helical membrane pass occupies residues 236-256 (TVFSFLLLYITNFIALILILS). Residues 257-266 (DTFVPLSTEE) lie on the Extracellular side of the membrane. A helical membrane pass occupies residues 267–287 (AICVVVVAACPAGQSMVLIWS). Residues 288 to 311 (NPRFRELLSSILHYVNSCVRARCS) lie on the Cytoplasmic side of the membrane.

It belongs to the G-protein coupled receptor T2R family. Expressed in the oral cavity, as well as in the gastrointestinal tract, including in the upper palate, tongue, proventriculus, ventriculus, duodenum, jejunum, ileum, cecum and colon.

Its subcellular location is the cell membrane. Its function is as follows. Bitter taste receptor. Binds quinine, dextromethorphan, diphenhydramine, diphenidol, chlorpheniramine, diphenidol, chloramphenicol, chloroquine and coumarin, this latter being a weak agonist, as well as epiquinidine, ethylhydrocupreine and quinidine. This Gallus gallus (Chicken) protein is Taste receptor type 2 member 40 (TAS2R40).